We begin with the raw amino-acid sequence, 555 residues long: Esterase-5A (555 aa).

The first 19 residues, 1–19 (MHLVRWLICLIQLWIQLGA), serve as a signal peptide directing secretion. A disulfide bridge links cysteine 87 with cysteine 106. Residues asparagine 95 and asparagine 116 are each glycosylated (N-linked (GlcNAc...) asparagine). Serine 210 serves as the catalytic Acyl-ester intermediate. A disulfide bridge links cysteine 262 with cysteine 274. Residues asparagine 479 and asparagine 510 are each glycosylated (N-linked (GlcNAc...) asparagine). Cysteines 518 and 539 form a disulfide.

This sequence belongs to the type-B carboxylesterase/lipase family.

Its subcellular location is the secreted. The catalysed reaction is a carboxylic ester + H2O = an alcohol + a carboxylate + H(+). In Drosophila miranda (Fruit fly), this protein is Esterase-5A (Est-5A).